We begin with the raw amino-acid sequence, 259 residues long: MQKPVPKKRLGQNFLKDRKIAEKIVENIDLKNKEIIEIGCGTGFLTNFLLEKAKFVTCYEIDKNLIPILEKKFKNKNLRIINEDFLLAEFESKEKKTIIANLPYYITSKILFKIFANFEKFDKIILMVQNEVADRIVAKPKTPTYSKLSLASQYIAKVRKLFVVGPDSFFPKPKVNSAVVSFDFRANLDAKEMENFFWFTKRCFQFKRKTLYNNLIFFLNKQQIEKIYNFFQFAQNIRPQQLDLVTYIRLADFYFNNIF.

Positions 13, 15, 39, 60, 84, and 101 each coordinate S-adenosyl-L-methionine.

This sequence belongs to the class I-like SAM-binding methyltransferase superfamily. rRNA adenine N(6)-methyltransferase family. RsmA subfamily.

The protein localises to the cytoplasm. The enzyme catalyses adenosine(1518)/adenosine(1519) in 16S rRNA + 4 S-adenosyl-L-methionine = N(6)-dimethyladenosine(1518)/N(6)-dimethyladenosine(1519) in 16S rRNA + 4 S-adenosyl-L-homocysteine + 4 H(+). Its function is as follows. Specifically dimethylates two adjacent adenosines (A1518 and A1519) in the loop of a conserved hairpin near the 3'-end of 16S rRNA in the 30S particle. May play a critical role in biogenesis of 30S subunits. This Mesomycoplasma hyopneumoniae (strain 232) (Mycoplasma hyopneumoniae) protein is Ribosomal RNA small subunit methyltransferase A.